Here is a 158-residue protein sequence, read N- to C-terminus: uncharacterized protein (158 aa).

Positions 13–110 constitute an HTH hxlR-type domain; that stretch reads ESVGRALELV…WGDEYLPRPE (98 aa).

This is an uncharacterized protein from Mycobacterium tuberculosis (strain CDC 1551 / Oshkosh).